The primary structure comprises 156 residues: Small ribosomal subunit protein uS7 (156 aa).

It belongs to the universal ribosomal protein uS7 family. Part of the 30S ribosomal subunit. Contacts proteins S9 and S11.

In terms of biological role, one of the primary rRNA binding proteins, it binds directly to 16S rRNA where it nucleates assembly of the head domain of the 30S subunit. Is located at the subunit interface close to the decoding center, probably blocks exit of the E-site tRNA. The protein is Small ribosomal subunit protein uS7 of Maridesulfovibrio salexigens (strain ATCC 14822 / DSM 2638 / NCIMB 8403 / VKM B-1763) (Desulfovibrio salexigens).